The chain runs to 370 residues: Metalloproteinase (370 aa).

Positions 1–15 are cleaved as a signal peptide; sequence MYLAYIFFLFATVSA. The 201-residue stretch at 170–370 folds into the Peptidase M12B domain; that stretch reads IVIEVLLVTD…DNYGKIFRMF (201 aa). The N-linked (GalNAc...) asparagine glycan is linked to Asn226. Zn(2+) is bound at residue His320. Glu321 is a catalytic residue. Zn(2+) is bound by residues His324 and His330.

Belongs to the venom metalloproteinase (M12B) family. Expressed by the venom gland.

The protein resides in the secreted. In terms of biological role, metalloprotease that may disrupt the cell matrix and the process of clotting blood or hemolymph. This Tityus obscurus (Amazonian scorpion) protein is Metalloproteinase.